The primary structure comprises 338 residues: Glycerol-3-phosphate dehydrogenase [NAD(P)+] (338 aa).

Serine 15, tyrosine 16, histidine 36, and lysine 110 together coordinate NADPH. 3 residues coordinate sn-glycerol 3-phosphate: lysine 110, glycine 139, and threonine 141. An NADPH-binding site is contributed by alanine 143. Positions 195, 248, 258, 259, and 260 each coordinate sn-glycerol 3-phosphate. The Proton acceptor role is filled by lysine 195. Arginine 259 is a binding site for NADPH. The NADPH site is built by valine 283 and glutamate 285.

Belongs to the NAD-dependent glycerol-3-phosphate dehydrogenase family.

It is found in the cytoplasm. It carries out the reaction sn-glycerol 3-phosphate + NAD(+) = dihydroxyacetone phosphate + NADH + H(+). It catalyses the reaction sn-glycerol 3-phosphate + NADP(+) = dihydroxyacetone phosphate + NADPH + H(+). It functions in the pathway membrane lipid metabolism; glycerophospholipid metabolism. In terms of biological role, catalyzes the reduction of the glycolytic intermediate dihydroxyacetone phosphate (DHAP) to sn-glycerol 3-phosphate (G3P), the key precursor for phospholipid synthesis. The polypeptide is Glycerol-3-phosphate dehydrogenase [NAD(P)+] (Edwardsiella ictaluri (strain 93-146)).